The sequence spans 332 residues: MQQYSSKYNKQAILLVNLGTPDNYDTKSIKRYLKEFLSDPRVIEANPILWKIILNLIILPIRAKKNIHTYKTVWNKQHNKSPLLFYTENLADKLDKKLDNYIVDYAMRYGNPSIESKIKSLQDQGATEIIIFPLYPQYSATTATVYDEVYRVLSKLRWQPTIKGINPYYDNKFHIQTISQQIKEHLKKLDSTPDTVLFSFHGLPKEYFDKGDPYYCHCYKTYRLVKEELQNEYPNIDFELSFQSRFGPKKWLEPYTTVKLEEFAKQNKSVVIIAPGFSADCLETLEELAISEKENFIKKGGKEFSLIPCLNDSNQHVDMLYNIIDEEICLKK.

Fe cation-binding residues include His201 and Glu283.

The protein belongs to the ferrochelatase family.

The protein localises to the cytoplasm. The enzyme catalyses heme b + 2 H(+) = protoporphyrin IX + Fe(2+). Its pathway is porphyrin-containing compound metabolism; protoheme biosynthesis; protoheme from protoporphyrin-IX: step 1/1. Functionally, catalyzes the ferrous insertion into protoporphyrin IX. The chain is Ferrochelatase from Francisella tularensis subsp. holarctica (strain FTNF002-00 / FTA).